Consider the following 109-residue polypeptide: MEMDLNNRLTEDETLEQAYDIFLELAADNLDPADIILFNLQFEERGGAELFDPAEDWQEHIDFDLNPDFFAEVVIGLADTEDGEINDIFARVLLCREKDHKLCHILWRE.

Belongs to the putative dsDNA mimic protein family.

In terms of biological role, may act as a double-stranded DNA (dsDNA) mimic. Probably regulates the activity of a dsDNA-binding protein. The sequence is that of Putative double-stranded DNA mimic protein YciU from Salmonella paratyphi B (strain ATCC BAA-1250 / SPB7).